Consider the following 364-residue polypeptide: Phenylalanine dehydrogenase (364 aa).

Arginine 62 provides a ligand contact to NAD(+). Lysine 86 lines the L-phenylalanine pocket. Lysine 98 serves as the catalytic Proton donor/acceptor. Residues aspartate 133, serine 164, threonine 168, 255-256, and 276-278 each bind NAD(+); these read AM and AAN. Asparagine 278 contributes to the L-phenylalanine binding site.

It belongs to the Glu/Leu/Phe/Val dehydrogenases family.

The enzyme catalyses L-phenylalanine + NAD(+) + H2O = 3-phenylpyruvate + NH4(+) + NADH + H(+). It functions in the pathway amino-acid biosynthesis; L-phenylalanine biosynthesis; L-phenylalanine from phenylpyruvate (PDH route): step 1/1. Functionally, catalyzes the reversible NAD(+)-dependent oxidative deamination of L-phenylalanine to phenylpyruvate. The sequence is that of Phenylalanine dehydrogenase from Rhodococcus jostii (strain RHA1).